A 943-amino-acid polypeptide reads, in one-letter code: MASDKSLLRMYGKYANEILSLEPEMKKLANEDFAIKTQELRDRIANGEHVDDLVVEAYALAREAANRVLGLNAYKVQLVGAIILHFGDIAEMRTGEGKTLTGLFPAYLNSLTGKGVHIVTVNEYLSRRDSEINGQVFDLLGVSVGLNGTRMPKNLKREAYHADITYTTNAELGFDYLRDNMVVDKEHKVQRELNFAIIDEADSVLIDEARTPLIISGGSSSRINLYKAADEFAQKVNEKEDIDIDLETKQVYLTETGMKKAKDFFSLENLFALENTEIFHLILNALKAHFTFKEGVEYTVASGEVELIDQFTGRILKGRAYSDGLQQAIQAKEKVEIEEETTTLATITYQNFYRLYAKLSGMTGTAKTEEEEFIKIYNTRVVVCPTNRPVIRKDEPDYTFGTKHAALKKLIQDIKTVNEIGNPILIGTTSVESSEQIARYLEKAGLNFEMINAKNHDREADIVSQAGQKYAITLATNMAGRGTDIKLSQEVKDLGGLVVFGVERNEARRIDNQLRGRSGRQGDPGMSRFYISMEDDLMIRFASPRARKSFLSLGDEHIKSKFFTRAVTNAQKKLEGLNFDQRKNVLDYDNILAQQREAMYAQRDSILWADNLKVVIKKFQITVAYEMIEENSEIVHGEKTLNAEKLLKSIDGKLVAHKRFVAKDFYNKEKMNLAVQLAEAMLEFYKARVIDIPDDVVLQMERKNVLTSFDKYWTRHIDIASKLKAGIYLQQYAQNNPLAVYVEQATELFNKTKIYIASEVVDVLSKIIIRDPEQNVESQKIEITDEIIDDILKSTGLTKANINNKDINAKFDELIAKADNQNDIKKLSIQRDIMLGLVIEIQKRRENSGNKTVNLGKEEIDQMLAILGIDNIGSTSKEEIISKYEEKLKLAEDDKTKNLINIAKDVIIALYEQIELIKKDASSLKSVIDDDNDGGEVAKTRIG.

ATP-binding positions include glutamine 77, 95 to 99 (GEGKT), and aspartate 484.

The protein belongs to the SecA family. As to quaternary structure, monomer and homodimer. Part of the essential Sec protein translocation apparatus which comprises SecA, SecYEG and auxiliary proteins SecDF. Other proteins may also be involved.

Its subcellular location is the cell membrane. It localises to the cytoplasm. It catalyses the reaction ATP + H2O + cellular proteinSide 1 = ADP + phosphate + cellular proteinSide 2.. Part of the Sec protein translocase complex. Interacts with the SecYEG preprotein conducting channel. Has a central role in coupling the hydrolysis of ATP to the transfer of proteins into and across the cell membrane, serving as an ATP-driven molecular motor driving the stepwise translocation of polypeptide chains across the membrane. This chain is Protein translocase subunit SecA, found in Mesoplasma florum (strain ATCC 33453 / NBRC 100688 / NCTC 11704 / L1) (Acholeplasma florum).